A 326-amino-acid polypeptide reads, in one-letter code: MSAVLTAGGGLTAGDRSIITAINTGASSLSFVGSAFIVLCYCLFKELRKFSFKLVFYLALSDMLCSFFLIVGDPSKGFICYAQGYTTHFFCVASFLWTTTIAFTLHRTVVKHKTDVEDLEAMFHLYVWGTSLVVTVIRSFGNNHSHLGPWCWTQTGLKGKAVHFLTFYAPLWGAILYNGFTYFQVIRMLRNARRMAVGMSDRVDQFDNRAELKVLNRWGYYPLILIGSWAFGTINRIHDFIEPGHKIFWLSVLDVGTAALMGLFNSIAYGFNSSVRRAIHERLELFLPERLYRWLPSNFRPKNHLILHQQQQQRSEMVSLKTEDQQ.

S2 is subject to N-acetylserine. Residues 2–23 lie on the Extracellular side of the membrane; that stretch reads SAVLTAGGGLTAGDRSIITAIN. Residues 24–44 traverse the membrane as a helical segment; it reads TGASSLSFVGSAFIVLCYCLF. At 45 to 51 the chain is on the cytoplasmic side; the sequence is KELRKFS. Residues 52–72 form a helical membrane-spanning segment; the sequence is FKLVFYLALSDMLCSFFLIVG. Residues 73 to 84 are Extracellular-facing; the sequence is DPSKGFICYAQG. C80 and C151 are joined by a disulfide. The chain crosses the membrane as a helical span at residues 85–105; sequence YTTHFFCVASFLWTTTIAFTL. Residues 106–120 lie on the Cytoplasmic side of the membrane; the sequence is HRTVVKHKTDVEDLE. Residues 121–141 traverse the membrane as a helical segment; it reads AMFHLYVWGTSLVVTVIRSFG. The Extracellular segment spans residues 142–160; sequence NNHSHLGPWCWTQTGLKGK. The N-linked (GlcNAc...) asparagine glycan is linked to N143. The helical transmembrane segment at 161 to 181 threads the bilayer; it reads AVHFLTFYAPLWGAILYNGFT. Residues 182 to 213 lie on the Cytoplasmic side of the membrane; sequence YFQVIRMLRNARRMAVGMSDRVDQFDNRAELK. A helical transmembrane segment spans residues 214 to 234; it reads VLNRWGYYPLILIGSWAFGTI. Residues 235 to 246 are Extracellular-facing; sequence NRIHDFIEPGHK. Residues 247–267 traverse the membrane as a helical segment; the sequence is IFWLSVLDVGTAALMGLFNSI. The Cytoplasmic portion of the chain corresponds to 268–326; that stretch reads AYGFNSSVRRAIHERLELFLPERLYRWLPSNFRPKNHLILHQQQQQRSEMVSLKTEDQQ.

Belongs to the G-protein coupled receptor 2 family. Interacts with GPA1. In terms of tissue distribution, mostly present in the meristematic regions. Expressed at low levels in seedlings, vascular tissues of cotyledons, hypocotyl, and roots, stems, leaves, flowering buds and siliques. In dark-grown seedlings, localized in the cotyledons and the hook.

It localises to the cell membrane. Functionally, together with GPA1, may regulate the cell cycle via a signaling cascade that uses phosphatidylinositol-specific phospholipase C (PI-PLC) as an effector and inositol 1,4,5-trisphosphate(IP(3)) as a second messenger. Promotes PI-PLC activity and IP(3) accumulation. Involved in the blue light (BL) signaling. Together with GPA1 and ADT3, required for BL-mediated synthesis of phenylpyruvate and subsequently of phenylalanine (Phe), in etiolated seedlings. Probably involved in cytokinin signal transduction. Plays a positive role in gibberellin- (GA) and brassinosteroid- (BR) regulated seed germination, probably independently of a heterotrimeric G-protein. Mediates seed dormancy abolition, and promotes seed germination and flowering. The chain is G-protein coupled receptor 1 (GCR1) from Arabidopsis thaliana (Mouse-ear cress).